Consider the following 284-residue polypeptide: Bifunctional protein FolD 1 (284 aa).

Residues glycine 166–serine 168 and isoleucine 232 each bind NADP(+).

The protein belongs to the tetrahydrofolate dehydrogenase/cyclohydrolase family. As to quaternary structure, homodimer.

It catalyses the reaction (6R)-5,10-methylene-5,6,7,8-tetrahydrofolate + NADP(+) = (6R)-5,10-methenyltetrahydrofolate + NADPH. The enzyme catalyses (6R)-5,10-methenyltetrahydrofolate + H2O = (6R)-10-formyltetrahydrofolate + H(+). The protein operates within one-carbon metabolism; tetrahydrofolate interconversion. Its function is as follows. Catalyzes the oxidation of 5,10-methylenetetrahydrofolate to 5,10-methenyltetrahydrofolate and then the hydrolysis of 5,10-methenyltetrahydrofolate to 10-formyltetrahydrofolate. This chain is Bifunctional protein FolD 1, found in Pseudomonas savastanoi pv. phaseolicola (strain 1448A / Race 6) (Pseudomonas syringae pv. phaseolicola (strain 1448A / Race 6)).